We begin with the raw amino-acid sequence, 127 residues long: UPF0102 protein Gura_3756 (127 aa).

It belongs to the UPF0102 family.

This chain is UPF0102 protein Gura_3756, found in Geotalea uraniireducens (strain Rf4) (Geobacter uraniireducens).